Reading from the N-terminus, the 393-residue chain is Protein TsgA (393 aa).

12 consecutive transmembrane segments (helical) span residues tryptophan 11 to methionine 31, phenylalanine 51 to proline 71, phenylalanine 78 to leucine 98, alanine 101 to isoleucine 121, leucine 134 to phenylalanine 154, tryptophan 162 to glycine 182, isoleucine 206 to isoleucine 226, threonine 245 to leucine 265, isoleucine 273 to proline 293, alanine 297 to leucine 317, phenylalanine 332 to valine 352, and leucine 361 to valine 381.

Belongs to the major facilitator superfamily. TsgA family.

The protein resides in the cell inner membrane. This Shigella dysenteriae serotype 1 (strain Sd197) protein is Protein TsgA.